We begin with the raw amino-acid sequence, 130 residues long: Small ribosomal subunit protein uS9 (130 aa).

Belongs to the universal ribosomal protein uS9 family.

In Vibrio vulnificus (strain CMCP6), this protein is Small ribosomal subunit protein uS9.